Reading from the N-terminus, the 432-residue chain is Histidinol dehydrogenase (432 aa).

Substrate-binding residues include Ser240, Gln262, and His265. Residues Gln262 and His265 each coordinate Zn(2+). Active-site proton acceptor residues include Glu330 and His331. Substrate is bound by residues His331, Asp364, Glu418, and His423. Asp364 contributes to the Zn(2+) binding site. Residue His423 participates in Zn(2+) binding.

This sequence belongs to the histidinol dehydrogenase family. Zn(2+) is required as a cofactor.

It carries out the reaction L-histidinol + 2 NAD(+) + H2O = L-histidine + 2 NADH + 3 H(+). It functions in the pathway amino-acid biosynthesis; L-histidine biosynthesis; L-histidine from 5-phospho-alpha-D-ribose 1-diphosphate: step 9/9. In terms of biological role, catalyzes the sequential NAD-dependent oxidations of L-histidinol to L-histidinaldehyde and then to L-histidine. The chain is Histidinol dehydrogenase from Wolinella succinogenes (strain ATCC 29543 / DSM 1740 / CCUG 13145 / JCM 31913 / LMG 7466 / NCTC 11488 / FDC 602W) (Vibrio succinogenes).